A 202-amino-acid chain; its full sequence is Imidazoleglycerol-phosphate dehydratase (202 aa).

The protein belongs to the imidazoleglycerol-phosphate dehydratase family.

The protein resides in the cytoplasm. It catalyses the reaction D-erythro-1-(imidazol-4-yl)glycerol 3-phosphate = 3-(imidazol-4-yl)-2-oxopropyl phosphate + H2O. Its pathway is amino-acid biosynthesis; L-histidine biosynthesis; L-histidine from 5-phospho-alpha-D-ribose 1-diphosphate: step 6/9. This is Imidazoleglycerol-phosphate dehydratase from Lactococcus lactis subsp. cremoris (strain SK11).